The following is a 485-amino-acid chain: Probable RNA-binding protein 46 (485 aa).

3 consecutive RRM domains span residues 61-139, 141-223, and 236-308; these read CEVF…VSLD, CRLF…WADP, and KVLY…LAKP.

In terms of assembly, interacts with YTHDC2, MEIOC, MOV10, CNOT6L, DDX4, UPF1 and PABPC1.

Its subcellular location is the cytoplasm. Its function is as follows. Essential for male and female fertility, playing a crucial role in regulating germ cell development by ensuring the proper progression of meiosis prophase I. Regulates mitotic-to-meiotic transition in spermatogenesis by forming a complex with MEIOC and YTHDC2 which recognizes and down-regulates mitotic transcripts for a successful meiotic entry. Required for normal synaptonemal complex formation during meiosis, binding meiotic cohesin subunit mRNAs containing GCCUAU/GUUCGA motifs in their 3'UTRs regions and positively regulating their translation. Required for spermatogonial differentiation in both developing and adult testis. This is Probable RNA-binding protein 46 (RBM46) from Macaca fascicularis (Crab-eating macaque).